Reading from the N-terminus, the 66-residue chain is Large ribosomal subunit protein uL29 (66 aa).

Belongs to the universal ribosomal protein uL29 family.

In Thermosipho africanus (strain TCF52B), this protein is Large ribosomal subunit protein uL29.